The following is a 178-amino-acid chain: TM2 domain-containing protein biscotti (178 aa).

Positions 1–18 (MFPVLLLLLFFFAKETHQ) are cleaved as a signal peptide. At 19-99 (INVDCNELQM…YHLDTTLLLS (81 aa)) the chain is on the extracellular side. N-linked (GlcNAc...) asparagine glycosylation is found at asparagine 69 and asparagine 75. Residues 94–137 (TTLLLSVFLGMFGVDRFYLGYPGIGLLKFCTLGGMFLGQLIDIV) enclose the TM2 domain. A helical transmembrane segment spans residues 100–120 (VFLGMFGVDRFYLGYPGIGLL). Over 121–124 (KFCT) the chain is Cytoplasmic. The chain crosses the membrane as a helical span at residues 125 to 145 (LGGMFLGQLIDIVLIALQVVG). Over 146 to 178 (PADGSAYVIPYYGAGIHIVRSDNTTYRLPRDDW) the chain is Extracellular. N-linked (GlcNAc...) asparagine glycosylation occurs at asparagine 168.

The protein belongs to the TM2 family.

The protein localises to the membrane. Positive regulator of Notch signaling. Maternal neurogenic factor involved in Notch signaling-dependent neuroectodermal specification during early embryogenesis. Functions cooperatively with amx/TM2D3 and amrt/TM2D2. The sequence is that of TM2 domain-containing protein biscotti from Drosophila melanogaster (Fruit fly).